A 142-amino-acid chain; its full sequence is Protein tost-1 (142 aa).

The disordered stretch occupies residues 97-123; sequence KVFEEEDKENAPTKKAVLKPSSTDEKK.

In terms of assembly, component of the tost-1 variant of the PETISCO complex (also called the pid-3, erh-2, tofu-6, and ife-3 small RNA complex) containing at least tost-1, tofu-6, ife-3, pid-3, and erh-2, which plays an essential role in embryogenesis. Within the complex interacts with erh-2. Within the complex interacts with pid-3 and tofu-6. In contrast to the pid-1 variant of the PETISCO complex, the tost-1 variant of the PETISCO complex plays a minor role in the biogenesis of a class of 21 nucleotide PIWI-interacting RNAs (piRNAs) that possess a uracil residue at the 5'-end (also called 21U-RNAs). As to expression, expressed in the germline.

Its subcellular location is the cytoplasm. It localises to the nucleus. In terms of biological role, component of the tost-1 variant of the PETISCO complex which plays an essential role in embryogenesis. Within the complex acts as an adapter which binds to the complex via erh-2. Does not seem to play a role in the biogenesis of a class of 21 nucleotide PIWI-interacting RNAs (piRNAs) that possess a uracil residue at the 5'-end (also called 21U-RNAs). May inhibit 21U-RNA accumulation. Required for chromosome segregation and cell division in early embryos. This Caenorhabditis elegans protein is Protein tost-1.